The chain runs to 1190 residues: DNA-directed RNA polymerase subunit beta (1190 aa).

Belongs to the RNA polymerase beta chain family. In terms of assembly, the RNAP catalytic core consists of 2 alpha, 1 beta, 1 beta' and 1 omega subunit. When a sigma factor is associated with the core the holoenzyme is formed, which can initiate transcription.

It catalyses the reaction RNA(n) + a ribonucleoside 5'-triphosphate = RNA(n+1) + diphosphate. Its function is as follows. DNA-dependent RNA polymerase catalyzes the transcription of DNA into RNA using the four ribonucleoside triphosphates as substrates. This is DNA-directed RNA polymerase subunit beta from Streptococcus suis (strain 98HAH33).